The chain runs to 333 residues: DNA-directed RNA polymerase subunit alpha (333 aa).

Positions 1-234 are alpha N-terminal domain (alpha-NTD); that stretch reads MQISVNEFLT…QQLAAFVDLK (234 aa). Positions 248–333 are alpha C-terminal domain (alpha-CTD); the sequence is IDPILLRPVD…SLKKDDKATA (86 aa).

The protein belongs to the RNA polymerase alpha chain family. Homodimer. The RNAP catalytic core consists of 2 alpha, 1 beta, 1 beta' and 1 omega subunit. When a sigma factor is associated with the core the holoenzyme is formed, which can initiate transcription.

The catalysed reaction is RNA(n) + a ribonucleoside 5'-triphosphate = RNA(n+1) + diphosphate. Its function is as follows. DNA-dependent RNA polymerase catalyzes the transcription of DNA into RNA using the four ribonucleoside triphosphates as substrates. This is DNA-directed RNA polymerase subunit alpha from Ectopseudomonas mendocina (strain ymp) (Pseudomonas mendocina).